Reading from the N-terminus, the 233-residue chain is Small ribosomal subunit protein uS3 (233 aa).

In terms of domain architecture, KH type-2 spans 39–107; it reads VRQFLMKTLE…PVQINISEVR (69 aa).

This sequence belongs to the universal ribosomal protein uS3 family. Part of the 30S ribosomal subunit. Forms a tight complex with proteins S10 and S14.

In terms of biological role, binds the lower part of the 30S subunit head. Binds mRNA in the 70S ribosome, positioning it for translation. The sequence is that of Small ribosomal subunit protein uS3 from Buchnera aphidicola subsp. Acyrthosiphon pisum (strain APS) (Acyrthosiphon pisum symbiotic bacterium).